The following is a 192-amino-acid chain: Elongation factor P (192 aa).

It belongs to the elongation factor P family.

The protein resides in the cytoplasm. Its pathway is protein biosynthesis; polypeptide chain elongation. Its function is as follows. Involved in peptide bond synthesis. Stimulates efficient translation and peptide-bond synthesis on native or reconstituted 70S ribosomes in vitro. Probably functions indirectly by altering the affinity of the ribosome for aminoacyl-tRNA, thus increasing their reactivity as acceptors for peptidyl transferase. The sequence is that of Elongation factor P (efp) from Borreliella burgdorferi (strain ATCC 35210 / DSM 4680 / CIP 102532 / B31) (Borrelia burgdorferi).